A 152-amino-acid polypeptide reads, in one-letter code: Transcriptional repressor NrdR (152 aa).

Residues 3 to 34 (CAFCGNPDTQVIDSRVSEDGSSIRRRRRCPAC) fold into a zinc finger. The region spanning 49-139 (PQVVKTAGHR…VYRSFQDISE (91 aa)) is the ATP-cone domain.

It belongs to the NrdR family. It depends on Zn(2+) as a cofactor.

In terms of biological role, negatively regulates transcription of bacterial ribonucleotide reductase nrd genes and operons by binding to NrdR-boxes. This chain is Transcriptional repressor NrdR, found in Chromobacterium violaceum (strain ATCC 12472 / DSM 30191 / JCM 1249 / CCUG 213 / NBRC 12614 / NCIMB 9131 / NCTC 9757 / MK).